A 342-amino-acid polypeptide reads, in one-letter code: Holliday junction branch migration complex subunit RuvB (342 aa).

Positions 1–179 are large ATPase domain (RuvB-L); it reads MTNILSPEKS…FGIPMRLNFY (179 aa). Residues Ile18, Arg19, Gly60, Lys63, Thr64, Thr65, 126 to 128, Arg169, Tyr179, and Arg216 each bind ATP; that span reads EDF. Thr64 contacts Mg(2+). The segment at 180 to 250 is small ATPAse domain (RuvB-S); the sequence is NTEELKQVLN…ICDFGLKRLT (71 aa). Residues 253-342 form a head domain (RuvB-H) region; the sequence is SIGLDSNDYR…NQLNILNENE (90 aa). Positions 289, 308, and 313 each coordinate DNA.

This sequence belongs to the RuvB family. In terms of assembly, homohexamer. Forms an RuvA(8)-RuvB(12)-Holliday junction (HJ) complex. HJ DNA is sandwiched between 2 RuvA tetramers; dsDNA enters through RuvA and exits via RuvB. An RuvB hexamer assembles on each DNA strand where it exits the tetramer. Each RuvB hexamer is contacted by two RuvA subunits (via domain III) on 2 adjacent RuvB subunits; this complex drives branch migration. In the full resolvosome a probable DNA-RuvA(4)-RuvB(12)-RuvC(2) complex forms which resolves the HJ.

The protein resides in the cytoplasm. The enzyme catalyses ATP + H2O = ADP + phosphate + H(+). In terms of biological role, participates in UV-tolerance of Synechocystis PCC 6803. Functionally, the RuvA-RuvB-RuvC complex processes Holliday junction (HJ) DNA during genetic recombination and DNA repair, while the RuvA-RuvB complex plays an important role in the rescue of blocked DNA replication forks via replication fork reversal (RFR). RuvA specifically binds to HJ cruciform DNA, conferring on it an open structure. The RuvB hexamer acts as an ATP-dependent pump, pulling dsDNA into and through the RuvAB complex. RuvB forms 2 homohexamers on either side of HJ DNA bound by 1 or 2 RuvA tetramers; 4 subunits per hexamer contact DNA at a time. Coordinated motions by a converter formed by DNA-disengaged RuvB subunits stimulates ATP hydrolysis and nucleotide exchange. Immobilization of the converter enables RuvB to convert the ATP-contained energy into a lever motion, pulling 2 nucleotides of DNA out of the RuvA tetramer per ATP hydrolyzed, thus driving DNA branch migration. The RuvB motors rotate together with the DNA substrate, which together with the progressing nucleotide cycle form the mechanistic basis for DNA recombination by continuous HJ branch migration. Branch migration allows RuvC to scan DNA until it finds its consensus sequence, where it cleaves and resolves cruciform DNA. This Rickettsia prowazekii (strain Madrid E) protein is Holliday junction branch migration complex subunit RuvB.